Reading from the N-terminus, the 267-residue chain is Hydroxyethylthiazole kinase 2 (267 aa).

Position 41 (methionine 41) interacts with substrate. The ATP site is built by lysine 116 and threonine 166. Residue glycine 193 participates in substrate binding.

Belongs to the Thz kinase family. Mg(2+) serves as cofactor.

It catalyses the reaction 5-(2-hydroxyethyl)-4-methylthiazole + ATP = 4-methyl-5-(2-phosphooxyethyl)-thiazole + ADP + H(+). It functions in the pathway cofactor biosynthesis; thiamine diphosphate biosynthesis; 4-methyl-5-(2-phosphoethyl)-thiazole from 5-(2-hydroxyethyl)-4-methylthiazole: step 1/1. Functionally, catalyzes the phosphorylation of the hydroxyl group of 4-methyl-5-beta-hydroxyethylthiazole (THZ). This is Hydroxyethylthiazole kinase 2 from Streptococcus pneumoniae (strain P1031).